The primary structure comprises 323 residues: tRNA dimethylallyltransferase (323 aa).

Residue 12–19 (GPTAAGKT) participates in ATP binding. 14–19 (TAAGKT) contacts substrate. Interaction with substrate tRNA stretches follow at residues 37–40 (DSAL) and 161–165 (QRLIR).

It belongs to the IPP transferase family. As to quaternary structure, monomer. The cofactor is Mg(2+).

The catalysed reaction is adenosine(37) in tRNA + dimethylallyl diphosphate = N(6)-dimethylallyladenosine(37) in tRNA + diphosphate. Its function is as follows. Catalyzes the transfer of a dimethylallyl group onto the adenine at position 37 in tRNAs that read codons beginning with uridine, leading to the formation of N6-(dimethylallyl)adenosine (i(6)A). This Pseudomonas syringae pv. tomato (strain ATCC BAA-871 / DC3000) protein is tRNA dimethylallyltransferase.